The primary structure comprises 198 residues: Probable chorismate pyruvate-lyase (198 aa).

Residues arginine 73, leucine 111, and glutamate 172 each contribute to the substrate site.

It belongs to the UbiC family.

Its subcellular location is the cytoplasm. The enzyme catalyses chorismate = 4-hydroxybenzoate + pyruvate. Its pathway is cofactor biosynthesis; ubiquinone biosynthesis. Functionally, removes the pyruvyl group from chorismate, with concomitant aromatization of the ring, to provide 4-hydroxybenzoate (4HB) for the ubiquinone pathway. This Burkholderia orbicola (strain AU 1054) protein is Probable chorismate pyruvate-lyase.